The sequence spans 158 residues: Ribosome maturation factor RimP (158 aa).

The protein belongs to the RimP family.

It is found in the cytoplasm. In terms of biological role, required for maturation of 30S ribosomal subunits. This is Ribosome maturation factor RimP from Lactobacillus delbrueckii subsp. bulgaricus (strain ATCC 11842 / DSM 20081 / BCRC 10696 / JCM 1002 / NBRC 13953 / NCIMB 11778 / NCTC 12712 / WDCM 00102 / Lb 14).